Here is an 84-residue protein sequence, read N- to C-terminus: Acyl carrier protein homolog (84 aa).

The 76-residue stretch at 4–79 (RDILLKIKEI…ELIAEVKHLI (76 aa)) folds into the Carrier domain. Position 39 is an O-(pantetheine 4'-phosphoryl)serine (Ser-39).

In terms of processing, 4'-phosphopantetheine is transferred from CoA to a specific serine of the apo-ACP-like protein.

Its pathway is lipid metabolism; fatty acid biosynthesis. Functionally, carrier of the growing fatty acid chain in fatty acid biosynthesis. This is Acyl carrier protein homolog from Mycoplasma pneumoniae (strain ATCC 29342 / M129 / Subtype 1) (Mycoplasmoides pneumoniae).